Reading from the N-terminus, the 437-residue chain is Elongator complex protein 4 (437 aa).

A disordered region spans residues Phe179 to Leu247. The segment covering Lys181–Gln192 has biased composition (polar residues). Ser183 is subject to Phosphoserine. The segment covering Ser220–Ser237 has biased composition (low complexity). Ser242 bears the Phosphoserine mark.

Belongs to the ELP4 family. In terms of assembly, component of the elongator complex composed of Elp1, Elp2, Elp3, Elp4, Elp5 and Elp6. The elongator complex associates with and stabilizes microtubules; efficient interaction requires the full complex.

The protein resides in the cytoplasm. The protein localises to the nucleus. Its subcellular location is the cytoskeleton. It localises to the spindle. It functions in the pathway tRNA modification; 5-methoxycarbonylmethyl-2-thiouridine-tRNA biosynthesis. Component of the elongator complex, which is required for multiple tRNA modifications, including mcm5U (5-methoxycarbonylmethyl uridine), mcm5s2U (5-methoxycarbonylmethyl-2-thiouridine), and ncm5U (5-carbamoylmethyl uridine). The elongator complex catalyzes the formation of carboxymethyluridine in the wobble base at position 34 in tRNAs. Binding by the elongator complex stabilizes microtubules and promotes their growth. This induces central spindle asymmetry, promoting polarized signaling endosome trafficking during asymmetric cell division and cell fate assignation of sensory organ precursor cells. The sequence is that of Elongator complex protein 4 from Drosophila melanogaster (Fruit fly).